The primary structure comprises 515 residues: Cytoplasmic dynein 1 light intermediate chain 1 (515 aa).

The span at 1-24 (MAAVGRAGSFGSSSASGAANNASA) shows a compositional bias: low complexity. The segment at 1 to 34 (MAAVGRAGSFGSSSASGAANNASAELRAGGEEDD) is disordered. ATP is bound at residue 64–71 (GEDGAGKT). Disordered regions lie at residues 370–424 (QSQL…DPNM) and 445–515 (KTGS…GEAS). Positions 397 to 409 (RTPNRSVTSNVAS) are enriched in polar residues. Residues 448–468 (SPGGPGGVGGSPGGGSAGGTG) are compositionally biased toward gly residues. The segment covering 490–499 (ELDRISRKPE) has biased composition (basic and acidic residues). Residues 502 to 515 (SPTSPTSPTEGEAS) show a composition bias toward polar residues.

This sequence belongs to the dynein light intermediate chain family. In terms of assembly, homodimer. The cytoplasmic dynein 1 complex consists of two catalytic heavy chains (HCs) and a number of non-catalytic subunits presented by intermediate chains (ICs). Phosphorylated.

The protein localises to the cytoplasm. It localises to the cytoskeleton. The protein resides in the chromosome. It is found in the centromere. Its subcellular location is the kinetochore. The protein localises to the spindle pole. It localises to the recycling endosome membrane. In terms of biological role, acts as one of several non-catalytic accessory components of the cytoplasmic dynein 1 complex that are thought to be involved in linking dynein to cargos and to adapter proteins that regulate dynein function. Cytoplasmic dynein 1 acts as a motor for the intracellular retrograde motility of vesicles and organelles along microtubules. May play a role in binding dynein to membranous organelles or chromosomes. May regulate the movement of peripheral sorting endosomes along microtubule tracks toward the microtubule organizing center/centrosome, generating the endosomal recycling compartment. This Gallus gallus (Chicken) protein is Cytoplasmic dynein 1 light intermediate chain 1 (DYNC1LI1).